A 245-amino-acid chain; its full sequence is tRNA1(Val) (adenine(37)-N6)-methyltransferase (245 aa).

Belongs to the methyltransferase superfamily. tRNA (adenine-N(6)-)-methyltransferase family.

It localises to the cytoplasm. The enzyme catalyses adenosine(37) in tRNA1(Val) + S-adenosyl-L-methionine = N(6)-methyladenosine(37) in tRNA1(Val) + S-adenosyl-L-homocysteine + H(+). Functionally, specifically methylates the adenine in position 37 of tRNA(1)(Val) (anticodon cmo5UAC). This chain is tRNA1(Val) (adenine(37)-N6)-methyltransferase, found in Escherichia coli O139:H28 (strain E24377A / ETEC).